The sequence spans 1023 residues: Presequence protease, mitochondrial (1023 aa).

The N-terminal 62 residues, 1 to 62 (MFRQSKTIIT…PDLFLTAVKL (62 aa)), are a transit peptide targeting the mitochondrion. Histidine 99 provides a ligand contact to Zn(2+). The Proton acceptor role is filled by glutamate 102. Residues histidine 103 and glutamate 200 each coordinate Zn(2+). Cysteines 114 and 551 form a disulfide.

This sequence belongs to the peptidase M16 family. PreP subfamily. Monomer and homodimer; homodimerization is induced by binding of the substrate. Requires Zn(2+) as cofactor. Post-translationally, a disulfide bond locks the enzyme in the closed conformation preventing substrate entry into the catalytic chamber.

It localises to the mitochondrion matrix. Mainly exists in a closed and catalytically competent conformation but a closed-to-open switch allows substrate entry into the catalytic chamber. Substrate binding induces closure and dimerization. A disulfide bond may lock the enzyme in a closed conformation preventing substrate entry into the catalytic chamber, participating in redox regulation of the enzyme. Inhibited by metal-chelating agents. Inhibited by nickel and zinc excess, and slightly activated by manganese. Functionally, metalloendopeptidase of the mitochondrial matrix that functions in peptide cleavage and degradation rather than in protein processing. Has an ATP-independent activity. Specifically cleaves peptides in the range of 5 to 65 residues. Shows a preference for cleavage after small polar residues and before basic residues, but without any positional preference. Degrades the transit peptides of mitochondrial proteins after their cleavage. Also degrades other unstructured peptides. The chain is Presequence protease, mitochondrial (pitrm1) from Danio rerio (Zebrafish).